The sequence spans 456 residues: Ezy-1 protein (456 aa).

Residues 1-28 form the signal peptide; sequence MQLSSSLRSARSAAASSGCALASRPVVA. Disordered stretches follow at residues 167-189, 273-310, and 414-456; these read SDGG…DGDG, FTGK…GGSG, and QPAG…SPNM. Residues 281-293 are compositionally biased toward acidic residues; that stretch reads AEGDDGEDEEEGE. Residues 418 to 428 are compositionally biased toward basic and acidic residues; it reads DGHEPEPKRPE.

In Chlamydomonas reinhardtii (Chlamydomonas smithii), this protein is Ezy-1 protein (Ezy-1).